Consider the following 466-residue polypeptide: 3-isopropylmalate dehydratase large subunit (466 aa).

Residues Cys-347, Cys-407, and Cys-410 each coordinate [4Fe-4S] cluster.

Belongs to the aconitase/IPM isomerase family. LeuC type 1 subfamily. Heterodimer of LeuC and LeuD. It depends on [4Fe-4S] cluster as a cofactor.

It carries out the reaction (2R,3S)-3-isopropylmalate = (2S)-2-isopropylmalate. The protein operates within amino-acid biosynthesis; L-leucine biosynthesis; L-leucine from 3-methyl-2-oxobutanoate: step 2/4. Functionally, catalyzes the isomerization between 2-isopropylmalate and 3-isopropylmalate, via the formation of 2-isopropylmaleate. The chain is 3-isopropylmalate dehydratase large subunit from Klebsiella pneumoniae subsp. pneumoniae (strain ATCC 700721 / MGH 78578).